Consider the following 123-residue polypeptide: MVLPLMFMYCKLAMLSLAVGCCPPVKYRLAIAIPLLFNLFSRGCGRVNFTSVKIAFICGDTDCSVPQTVVPFFSSMVTCSLRSFFKKLTNFIIFFSTIYKRYLESSFFMTISLYMNISYILLF.

The next 2 helical transmembrane spans lie at 1 to 21 and 103 to 123; these read MVLPLMFMYCKLAMLSLAVGC and LESSFFMTISLYMNISYILLF.

It is found in the membrane. This is an uncharacterized protein from Saccharomyces cerevisiae (strain ATCC 204508 / S288c) (Baker's yeast).